The primary structure comprises 856 residues: Envelope glycoprotein gp160 (856 aa).

The N-terminal stretch at 1–31 (MKVKGIQGNWQNWWKWGTLILGLVIICSAAE) is a signal peptide. Residues 32 to 684 (NLWVTVYYGV…ISNWLWYIKI (653 aa)) are Extracellular-facing. A disulfide bond links C53 and C73. Residues N87, N132, N138, N152, N156, N183, and N198 are each glycosylated (N-linked (GlcNAc...) asparagine; by host). 5 cysteine pairs are disulfide-bonded: C118-C206, C125-C197, C130-C153, C219-C248, and C229-C240. The segment at 130–152 (CHNITIKDNNTNVDTEMKEEIKN) is V1. Positions 153 to 197 (CSYNMTTELRDKQRKIYSLFYRLDIVPIGGNSSNGDSSKYRLINC) are V2. N-linked (GlcNAc...) asparagine; by host glycosylation is found at N242, N263, N277, N294, N302, N332, N339, N355, and N364. The V3 stretch occupies residues 297-330 (CMRPNNNTRKSISIGPGRAFFATGDIIGDIRQAH). C297 and C331 are joined by a disulfide. The CD4-binding loop stretch occupies residues 365-375 (SSGGDVEITTH). Intrachain disulfides connect C379-C445 and C386-C418. The tract at residues 386–418 (CNTSGLFNGTWLNGTSNNTWKIDTVNDTIILPC) is V4. 9 N-linked (GlcNAc...) asparagine; by host glycosylation sites follow: N387, N393, N398, N402, N411, N448, N461, N462, and N465. V5 regions lie at residues 461 to 471 (NNTSNETFRPG) and 463 to 471 (TSNETFRPG). Residues 512 to 532 (AIGMGAFFLGFLGAAGSTMGA) are fusion peptide. Residues 574–592 (KQLQARILAVERYLKDQQL) are immunosuppression. C598 and C604 are oxidised to a cystine. N-linked (GlcNAc...) asparagine; by host glycosylation is found at N611, N616, and N637. Residues 633–667 (KEVSNYTQVIYNLIEESQTQQEINERDLLALDKWA) adopt a coiled-coil conformation. The interval 662–683 (ALDKWANLWNWFDISNWLWYIK) is MPER; binding to GalCer. A helical membrane pass occupies residues 685-705 (FIMIVGGLIGLRIVFAVLSII). Residues 706–856 (NRVRQGYSPL…IRQGLERALL (151 aa)) are Cytoplasmic-facing. Residues 712-715 (YSPL) carry the YXXL motif; contains endocytosis signal motif. The interval 720-742 (LTHHQREPDRPERIEEGGGEQDR) is disordered. A compositionally biased stretch (basic and acidic residues) spans 723 to 742 (HQREPDRPERIEEGGGEQDR). Residue C764 is the site of S-palmitoyl cysteine; by host attachment. Positions 855 to 856 (LL) match the Di-leucine internalization motif motif.

This sequence belongs to the HIV-1 env protein family. In terms of assembly, the mature envelope protein (Env) consists of a homotrimer of non-covalently associated gp120-gp41 heterodimers. The resulting complex protrudes from the virus surface as a spike. There seems to be as few as 10 spikes on the average virion. Interacts with host CD4, CCR5 and CXCR4. Gp120 also interacts with the C-type lectins CD209/DC-SIGN and CLEC4M/DC-SIGNR (collectively referred to as DC-SIGN(R)). Gp120 and gp41 interact with GalCer. Gp120 interacts with host ITGA4/ITGB7 complex; on CD4+ T-cells, this interaction results in rapid activation of integrin ITGAL/LFA-1, which facilitates efficient cell-to-cell spreading of HIV-1. Gp120 interacts with cell-associated heparan sulfate; this interaction increases virus infectivity on permissive cells and may be involved in infection of CD4- cells. As to quaternary structure, the mature envelope protein (Env) consists of a homotrimer of non-covalently associated gp120-gp41 heterodimers. The resulting complex protrudes from the virus surface as a spike. There seems to be as few as 10 spikes on the average virion. Post-translationally, highly glycosylated by host. The high number of glycan on the protein is reffered to as 'glycan shield' because it contributes to hide protein sequence from adaptive immune system. Palmitoylation of the transmembrane protein and of Env polyprotein (prior to its proteolytic cleavage) is essential for their association with host cell membrane lipid rafts. Palmitoylation is therefore required for envelope trafficking to classical lipid rafts, but not for viral replication. In terms of processing, specific enzymatic cleavages in vivo yield mature proteins. Envelope glycoproteins are synthesized as an inactive precursor that is heavily N-glycosylated and processed likely by host cell furin in the Golgi to yield the mature SU and TM proteins. The cleavage site between SU and TM requires the minimal sequence [KR]-X-[KR]-R. About 2 of the 9 disulfide bonds of gp41 are reduced by P4HB/PDI, following binding to CD4 receptor.

It localises to the virion membrane. It is found in the host cell membrane. The protein resides in the host endosome membrane. Its function is as follows. Oligomerizes in the host endoplasmic reticulum into predominantly trimers. In a second time, gp160 transits in the host Golgi, where glycosylation is completed. The precursor is then proteolytically cleaved in the trans-Golgi and thereby activated by cellular furin or furin-like proteases to produce gp120 and gp41. In terms of biological role, attaches the virus to the host lymphoid cell by binding to the primary receptor CD4. This interaction induces a structural rearrangement creating a high affinity binding site for a chemokine coreceptor like CXCR4 and/or CCR5. Acts as a ligand for CD209/DC-SIGN and CLEC4M/DC-SIGNR, which are respectively found on dendritic cells (DCs), and on endothelial cells of liver sinusoids and lymph node sinuses. These interactions allow capture of viral particles at mucosal surfaces by these cells and subsequent transmission to permissive cells. HIV subverts the migration properties of dendritic cells to gain access to CD4+ T-cells in lymph nodes. Virus transmission to permissive T-cells occurs either in trans (without DCs infection, through viral capture and transmission), or in cis (following DCs productive infection, through the usual CD4-gp120 interaction), thereby inducing a robust infection. In trans infection, bound virions remain infectious over days and it is proposed that they are not degraded, but protected in non-lysosomal acidic organelles within the DCs close to the cell membrane thus contributing to the viral infectious potential during DCs' migration from the periphery to the lymphoid tissues. On arrival at lymphoid tissues, intact virions recycle back to DCs' cell surface allowing virus transmission to CD4+ T-cells. Functionally, acts as a class I viral fusion protein. Under the current model, the protein has at least 3 conformational states: pre-fusion native state, pre-hairpin intermediate state, and post-fusion hairpin state. During fusion of viral and target intracellular membranes, the coiled coil regions (heptad repeats) assume a trimer-of-hairpins structure, positioning the fusion peptide in close proximity to the C-terminal region of the ectodomain. The formation of this structure appears to drive apposition and subsequent fusion of viral and target cell membranes. Complete fusion occurs in host cell endosomes and is dynamin-dependent, however some lipid transfer might occur at the plasma membrane. The virus undergoes clathrin-dependent internalization long before endosomal fusion, thus minimizing the surface exposure of conserved viral epitopes during fusion and reducing the efficacy of inhibitors targeting these epitopes. Membranes fusion leads to delivery of the nucleocapsid into the cytoplasm. This is Envelope glycoprotein gp160 from Homo sapiens (Human).